A 421-amino-acid chain; its full sequence is Acetate kinase (421 aa).

Mg(2+) is bound at residue Asn-7. Lys-14 lines the ATP pocket. Residue Arg-91 participates in substrate binding. The active-site Proton donor/acceptor is the Asp-148. ATP contacts are provided by residues 208–212 (HIGNG) and 283–285 (DRR). Glu-387 is a binding site for Mg(2+).

It belongs to the acetokinase family. In terms of assembly, homodimer. It depends on Mg(2+) as a cofactor. Mn(2+) serves as cofactor.

Its subcellular location is the cytoplasm. It catalyses the reaction acetate + ATP = acetyl phosphate + ADP. Its pathway is metabolic intermediate biosynthesis; acetyl-CoA biosynthesis; acetyl-CoA from acetate: step 1/2. In terms of biological role, catalyzes the formation of acetyl phosphate from acetate and ATP. Can also catalyze the reverse reaction. This Geobacter metallireducens (strain ATCC 53774 / DSM 7210 / GS-15) protein is Acetate kinase.